A 487-amino-acid polypeptide reads, in one-letter code: Beta-barrel assembly-enhancing protease (487 aa).

An N-terminal signal peptide occupies residues 1-27; that stretch reads MFRQLKKNLVATLIAAMTIGQVAPAFA. Position 136 (His136) interacts with Zn(2+). Glu137 is a catalytic residue. Residues His140 and Glu201 each contribute to the Zn(2+) site. Asp205 (proton donor) is an active-site residue. TPR repeat units lie at residues 309–342, 344–376, 377–409, and 427–460; these read RAAQ…EPGN, WYLD…RTNP, VLQL…NKDD, and DQEL…VKLG.

The protein belongs to the peptidase M48 family. BepA subfamily. As to quaternary structure, interacts with BamA and LoiP. Requires Zn(2+) as cofactor.

Its subcellular location is the periplasm. With respect to regulation, protease activity is inhibited by the metal chelating reagents 1,10-phenanthroline and EDTA. In terms of biological role, functions both as a chaperone and a metalloprotease. Maintains the integrity of the outer membrane by promoting either the assembly or the elimination of outer membrane proteins, depending on their folding state. Promotes disulfide rearrangement of LptD during its biogenesis, and proteolytic degradation of LptD and BamA when their proper assembly is compromised. May facilitate membrane attachment of LoiP under unfavorable conditions. This chain is Beta-barrel assembly-enhancing protease, found in Escherichia coli (strain K12).